The sequence spans 89 residues: Ragulator complex protein LAMTOR5 homolog (89 aa).

Belongs to the LAMTOR5 family. As to quaternary structure, part of the Ragulator complex.

It localises to the cytoplasm. The protein localises to the lysosome. Its function is as follows. Regulator of the TOR pathway, a signaling cascade that promotes cell growth in response to growth factors, energy levels, and amino acids. As part of the Ragulator complex, may activate the TOR signaling cascade in response to amino acids. The polypeptide is Ragulator complex protein LAMTOR5 homolog (Dictyostelium discoideum (Social amoeba)).